A 776-amino-acid polypeptide reads, in one-letter code: MLKLFSAFRKEKVWDFNGGIHPPEMKTQSNGTPLRQLPLPGRFIIPLKQHIGSEGEICVAPGDKVLRGQPLTIGRGRMLPVHAPTSGTVTAIMPHPTAHPSALPELSVIIDADGEDRWIARDGWSDYQCRSREALIERIHQFGVAGLGGAGFPTGTKLQGGGDKIETLIINAAECEPYITADDRLMQDCAAQIIDGVRILAHILQPREVLIGIEDNKPQAISMMRAVLHGEHKIRLRVIPTKYPSGGAKQLTQILTGKQVPHGGRSSDIGVLMQNVGTAFAVKRAIIDGEPLTERVVTLTGEAVGRPGNVWARIGTPVRHLLEHAGFIPTSEQLVIMGGPLMGFTLPGLDVPVVKITNCLLAPSATEMGAPQEEQHCIRCSACADACPADLLPQQLYWFSVGQQHDKATAHNLADCIECGACAYVCPSNIPLVQYFRQEKAEIRAIAEEEKRAAEAKARFEARQARLEREKAARLERHKKSAVQPSGQDQDAIQAALARVREKKGDDQPIIVAAGAKPDNSAVIAAREARKAEARARQAEKVQQEMAANSSVPAHEATEPEIDASAESVDPRKAAVEAAIARAKARKAAQAGENATADEKPAEPIDPRKAAVEAAIARAKARKAAQAGENATADEKPAEPIDPRKAAVEAAIARAKARKAAQAGENATADEKPAEPIDPRKAAVEAAIARAKARKAAQAGENATADEKPAEPIDPRKATVEAAIARAKARKAAQAGERAQAANEENEAEDPRKAAVAAAIARVQARKAAEKVVNED.

4Fe-4S ferredoxin-type domains follow at residues 368 to 397 and 407 to 436; these read MGAPQEEQHCIRCSACADACPADLLPQQLY and KATAHNLADCIECGACAYVCPSNIPLVQYF. Positions 377, 380, 383, 387, 416, 419, 422, and 426 each coordinate [4Fe-4S] cluster. Basic and acidic residues-rich tracts occupy residues 534-543, 597-611, 633-647, 669-683, and 705-719; these read ARARQAEKVQ, ADEKPAEPIDPRKAA, and ADEKPAEPIDPRKAT. The disordered stretch occupies residues 534 to 754; sequence ARARQAEKVQ…ENEAEDPRKA (221 aa). Residues 721 to 743 are compositionally biased toward low complexity; that stretch reads EAAIARAKARKAAQAGERAQAAN.

The protein belongs to the 4Fe4S bacterial-type ferredoxin family. RnfC subfamily. In terms of assembly, the complex is composed of six subunits: RnfA, RnfB, RnfC, RnfD, RnfE and RnfG. Requires [4Fe-4S] cluster as cofactor.

The protein localises to the cell inner membrane. In terms of biological role, part of a membrane-bound complex that couples electron transfer with translocation of ions across the membrane. This Cronobacter sakazakii (strain ATCC BAA-894) (Enterobacter sakazakii) protein is Ion-translocating oxidoreductase complex subunit C.